The sequence spans 255 residues: Thiazole synthase (255 aa).

The active-site Schiff-base intermediate with DXP is lysine 97. 1-deoxy-D-xylulose 5-phosphate is bound by residues glycine 158, 184-185, and 206-207; these read AG and NT.

Belongs to the ThiG family. In terms of assembly, homotetramer. Forms heterodimers with either ThiH or ThiS.

Its subcellular location is the cytoplasm. It carries out the reaction [ThiS sulfur-carrier protein]-C-terminal-Gly-aminoethanethioate + 2-iminoacetate + 1-deoxy-D-xylulose 5-phosphate = [ThiS sulfur-carrier protein]-C-terminal Gly-Gly + 2-[(2R,5Z)-2-carboxy-4-methylthiazol-5(2H)-ylidene]ethyl phosphate + 2 H2O + H(+). It participates in cofactor biosynthesis; thiamine diphosphate biosynthesis. Functionally, catalyzes the rearrangement of 1-deoxy-D-xylulose 5-phosphate (DXP) to produce the thiazole phosphate moiety of thiamine. Sulfur is provided by the thiocarboxylate moiety of the carrier protein ThiS. In vitro, sulfur can be provided by H(2)S. The sequence is that of Thiazole synthase from Acetivibrio thermocellus (strain ATCC 27405 / DSM 1237 / JCM 9322 / NBRC 103400 / NCIMB 10682 / NRRL B-4536 / VPI 7372) (Clostridium thermocellum).